A 398-amino-acid polypeptide reads, in one-letter code: Protein CDKN2AIP homolog A (398 aa).

The XRN2-binding (XTBD) domain occupies 19 to 124 (LELVHGECES…KVKKRGISSS (106 aa)). The disordered stretch occupies residues 118–245 (KRGISSSNEG…SDNALKPTRR (128 aa)). Basic and acidic residues predominate over residues 131–147 (EPCKKQKSSDHGERESS). Composition is skewed to polar residues over residues 154 to 163 (SDGNVPSTSL), 189 to 199 (RRSLPVSNAKS), and 226 to 238 (QTSM…SSDN).

Belongs to the CARF family.

The protein resides in the nucleus. The protein localises to the nucleoplasm. Functionally, may regulate DNA damage response and cell proliferation. This Xenopus laevis (African clawed frog) protein is Protein CDKN2AIP homolog A (cdkn2aip-a).